The primary structure comprises 142 residues: Small ribosomal subunit protein bS6 (142 aa).

The tract at residues 110–142 (NKKPSHAKEKHEKTEHAHSHHTEEAGSKESHSE) is disordered.

The protein belongs to the bacterial ribosomal protein bS6 family.

Functionally, binds together with bS18 to 16S ribosomal RNA. This Helicobacter acinonychis (strain Sheeba) protein is Small ribosomal subunit protein bS6.